The following is a 350-amino-acid chain: Glycosyltransferase 8 domain-containing protein 2 (350 aa).

Residues 1-6 (MALLRK) lie on the Cytoplasmic side of the membrane. Residues 7–24 (INQVLLFLLIVTLCGILY) form a helical; Signal-anchor for type II membrane protein membrane-spanning segment. At 25-349 (KKVHKGTMLR…AGIFKLHHPN (325 aa)) the chain is on the lumenal side. Asn-234 carries an N-linked (GlcNAc...) asparagine glycan.

Belongs to the glycosyltransferase 8 family.

The protein localises to the membrane. In Bos taurus (Bovine), this protein is Glycosyltransferase 8 domain-containing protein 2 (GLT8D2).